The primary structure comprises 118 residues: Small ribosomal subunit protein uS13 (118 aa).

The tract at residues 96-118 is disordered; that stretch reads PLRGQRTRTNARTRKGPRKAIKK.

The protein belongs to the universal ribosomal protein uS13 family. As to quaternary structure, part of the 30S ribosomal subunit. Forms a loose heterodimer with protein S19. Forms two bridges to the 50S subunit in the 70S ribosome.

Its function is as follows. Located at the top of the head of the 30S subunit, it contacts several helices of the 16S rRNA. In the 70S ribosome it contacts the 23S rRNA (bridge B1a) and protein L5 of the 50S subunit (bridge B1b), connecting the 2 subunits; these bridges are implicated in subunit movement. Contacts the tRNAs in the A and P-sites. In Stenotrophomonas maltophilia (strain K279a), this protein is Small ribosomal subunit protein uS13.